A 139-amino-acid chain; its full sequence is Large ribosomal subunit protein uL16 (139 aa).

The span at 1–17 shows a compositional bias: basic residues; sequence MLMPKRVKYRKTQRGRM. Residues 1–24 are disordered; the sequence is MLMPKRVKYRKTQRGRMKGNSGRG.

The protein belongs to the universal ribosomal protein uL16 family. As to quaternary structure, part of the 50S ribosomal subunit.

Its function is as follows. Binds 23S rRNA and is also seen to make contacts with the A and possibly P site tRNAs. The polypeptide is Large ribosomal subunit protein uL16 (Pelodictyon phaeoclathratiforme (strain DSM 5477 / BU-1)).